Reading from the N-terminus, the 387-residue chain is Arginine biosynthesis bifunctional protein ArgJ 2 (387 aa).

Substrate is bound by residues T147, K169, T180, E259, N382, and T387. The active-site Nucleophile is T180.

This sequence belongs to the ArgJ family. In terms of assembly, heterotetramer of two alpha and two beta chains.

It is found in the cytoplasm. It carries out the reaction N(2)-acetyl-L-ornithine + L-glutamate = N-acetyl-L-glutamate + L-ornithine. The catalysed reaction is L-glutamate + acetyl-CoA = N-acetyl-L-glutamate + CoA + H(+). It participates in amino-acid biosynthesis; L-arginine biosynthesis; L-ornithine and N-acetyl-L-glutamate from L-glutamate and N(2)-acetyl-L-ornithine (cyclic): step 1/1. It functions in the pathway amino-acid biosynthesis; L-arginine biosynthesis; N(2)-acetyl-L-ornithine from L-glutamate: step 1/4. In terms of biological role, catalyzes two activities which are involved in the cyclic version of arginine biosynthesis: the synthesis of N-acetylglutamate from glutamate and acetyl-CoA as the acetyl donor, and of ornithine by transacetylation between N(2)-acetylornithine and glutamate. The polypeptide is Arginine biosynthesis bifunctional protein ArgJ 2 (Nostoc sp. (strain PCC 7120 / SAG 25.82 / UTEX 2576)).